We begin with the raw amino-acid sequence, 276 residues long: Urease accessory protein UreD (276 aa).

This sequence belongs to the UreD family. UreD, UreF and UreG form a complex that acts as a GTP-hydrolysis-dependent molecular chaperone, activating the urease apoprotein by helping to assemble the nickel containing metallocenter of UreC. The UreE protein probably delivers the nickel.

Its subcellular location is the cytoplasm. Its function is as follows. Required for maturation of urease via the functional incorporation of the urease nickel metallocenter. This chain is Urease accessory protein UreD, found in Paracidovorax citrulli (strain AAC00-1) (Acidovorax citrulli).